Here is a 316-residue protein sequence, read N- to C-terminus: Acetyl-coenzyme A carboxylase carboxyl transferase subunit alpha (316 aa).

Residues 36–290 form the CoA carboxyltransferase C-terminal domain; sequence KLEQKLDSLK…KQFLVEQLHI (255 aa).

This sequence belongs to the AccA family. Acetyl-CoA carboxylase is a heterohexamer composed of biotin carboxyl carrier protein (AccB), biotin carboxylase (AccC) and two subunits each of ACCase subunit alpha (AccA) and ACCase subunit beta (AccD).

The protein resides in the cytoplasm. It catalyses the reaction N(6)-carboxybiotinyl-L-lysyl-[protein] + acetyl-CoA = N(6)-biotinyl-L-lysyl-[protein] + malonyl-CoA. The protein operates within lipid metabolism; malonyl-CoA biosynthesis; malonyl-CoA from acetyl-CoA: step 1/1. Its function is as follows. Component of the acetyl coenzyme A carboxylase (ACC) complex. First, biotin carboxylase catalyzes the carboxylation of biotin on its carrier protein (BCCP) and then the CO(2) group is transferred by the carboxyltransferase to acetyl-CoA to form malonyl-CoA. This is Acetyl-coenzyme A carboxylase carboxyl transferase subunit alpha from Protochlamydia amoebophila (strain UWE25).